Here is a 329-residue protein sequence, read N- to C-terminus: Sex comb on midleg-like protein 1 (329 aa).

The interval 125–194 (NEVHESFSYP…SDFSEHNYQP (70 aa)) is disordered. Position 138 is a phosphoserine (Ser138). Basic and acidic residues predominate over residues 159-168 (FRMEEYQRAE). Residue Ser238 is modified to Phosphoserine. An SAM domain is found at 258–325 (WSVEAVVLFL…YYIDRLKQGK (68 aa)).

This sequence belongs to the SCM family. Highly expressed in testis and pancreas. Preferentially expressed in the germ stem cells of testis.

It localises to the nucleus. Putative Polycomb group (PcG) protein. PcG proteins act by forming multiprotein complexes, which are required to maintain the transcriptionally repressive state of homeotic genes throughout development. May be involved in spermatogenesis during sexual maturation. The protein is Sex comb on midleg-like protein 1 (SCML1) of Macaca mulatta (Rhesus macaque).